The chain runs to 370 residues: tRNA-specific 2-thiouridylase MnmA (370 aa).

ATP is bound by residues 9–16 and Met35; that span reads GMSGGVDS. Residues 95-97 are interaction with target base in tRNA; that stretch reads NPD. Cys100 serves as the catalytic Nucleophile. Cys100 and Cys196 are oxidised to a cystine. Gly124 lines the ATP pocket. Residues 146 to 148 form an interaction with tRNA region; it reads KDQ. The Cysteine persulfide intermediate role is filled by Cys196. The interaction with tRNA stretch occupies residues 308–309; it reads RY.

The protein belongs to the MnmA/TRMU family.

The protein resides in the cytoplasm. It carries out the reaction S-sulfanyl-L-cysteinyl-[protein] + uridine(34) in tRNA + AH2 + ATP = 2-thiouridine(34) in tRNA + L-cysteinyl-[protein] + A + AMP + diphosphate + H(+). Its function is as follows. Catalyzes the 2-thiolation of uridine at the wobble position (U34) of tRNA, leading to the formation of s(2)U34. In Ralstonia pickettii (strain 12J), this protein is tRNA-specific 2-thiouridylase MnmA.